We begin with the raw amino-acid sequence, 157 residues long: 6,7-dimethyl-8-ribityllumazine synthase (157 aa).

5-amino-6-(D-ribitylamino)uracil-binding positions include Phe-24, 58–60 (SFE), and 82–84 (AVI). (2S)-2-hydroxy-3-oxobutyl phosphate is bound at residue 87 to 88 (ET). His-90 (proton donor) is an active-site residue. Phe-115 lines the 5-amino-6-(D-ribitylamino)uracil pocket. Arg-129 is a (2S)-2-hydroxy-3-oxobutyl phosphate binding site.

Belongs to the DMRL synthase family.

It catalyses the reaction (2S)-2-hydroxy-3-oxobutyl phosphate + 5-amino-6-(D-ribitylamino)uracil = 6,7-dimethyl-8-(1-D-ribityl)lumazine + phosphate + 2 H2O + H(+). It participates in cofactor biosynthesis; riboflavin biosynthesis; riboflavin from 2-hydroxy-3-oxobutyl phosphate and 5-amino-6-(D-ribitylamino)uracil: step 1/2. Catalyzes the formation of 6,7-dimethyl-8-ribityllumazine by condensation of 5-amino-6-(D-ribitylamino)uracil with 3,4-dihydroxy-2-butanone 4-phosphate. This is the penultimate step in the biosynthesis of riboflavin. This Thermus thermophilus (strain ATCC BAA-163 / DSM 7039 / HB27) protein is 6,7-dimethyl-8-ribityllumazine synthase.